The primary structure comprises 338 residues: Anthranilate phosphoribosyltransferase (338 aa).

5-phospho-alpha-D-ribose 1-diphosphate is bound by residues Gly-81, 84 to 85 (GD), Thr-89, 91 to 94 (NIST), 109 to 117 (KHGNRALSS), and Ala-121. Gly-81 contributes to the anthranilate binding site. Ser-93 lines the Mg(2+) pocket. Residue Asn-112 participates in anthranilate binding. Arg-167 lines the anthranilate pocket. Asp-225 and Glu-226 together coordinate Mg(2+).

Belongs to the anthranilate phosphoribosyltransferase family. Homodimer. Requires Mg(2+) as cofactor.

The enzyme catalyses N-(5-phospho-beta-D-ribosyl)anthranilate + diphosphate = 5-phospho-alpha-D-ribose 1-diphosphate + anthranilate. Its pathway is amino-acid biosynthesis; L-tryptophan biosynthesis; L-tryptophan from chorismate: step 2/5. In terms of biological role, catalyzes the transfer of the phosphoribosyl group of 5-phosphorylribose-1-pyrophosphate (PRPP) to anthranilate to yield N-(5'-phosphoribosyl)-anthranilate (PRA). This chain is Anthranilate phosphoribosyltransferase, found in Rhizobium etli (strain ATCC 51251 / DSM 11541 / JCM 21823 / NBRC 15573 / CFN 42).